The primary structure comprises 185 residues: MALDKLLENEAQSEIERIRAEARGRAEKIVADARERAQTLLDSRQRLLENQRQAGLVRARSAADLELNAARLTASESGVTQVYQMVEDYLGNVTSAPEYGNILSRLIQEGLQAVPDAEAIEVNPAEMNVARHLVSGVEVRENPSIKGGVRVVARGGKSGVTNTLSGRLERVKADMAPQISRLLAE.

Belongs to the V-ATPase E subunit family.

Functionally, produces ATP from ADP in the presence of a proton gradient across the membrane. This Deinococcus radiodurans (strain ATCC 13939 / DSM 20539 / JCM 16871 / CCUG 27074 / LMG 4051 / NBRC 15346 / NCIMB 9279 / VKM B-1422 / R1) protein is V-type ATP synthase subunit E.